The chain runs to 210 residues: ATP-dependent dethiobiotin synthetase BioD (210 aa).

D13 to V18 contacts ATP. A Mg(2+)-binding site is contributed by T17. The active site involves K33. Mg(2+) is bound by residues R47 and E101. Residues E101–G104 and P185–L187 contribute to the ATP site.

It belongs to the dethiobiotin synthetase family. As to quaternary structure, homodimer. Requires Mg(2+) as cofactor.

Its subcellular location is the cytoplasm. The catalysed reaction is (7R,8S)-7,8-diammoniononanoate + CO2 + ATP = (4R,5S)-dethiobiotin + ADP + phosphate + 3 H(+). Its pathway is cofactor biosynthesis; biotin biosynthesis; biotin from 7,8-diaminononanoate: step 1/2. In terms of biological role, catalyzes a mechanistically unusual reaction, the ATP-dependent insertion of CO2 between the N7 and N8 nitrogen atoms of 7,8-diaminopelargonic acid (DAPA, also called 7,8-diammoniononanoate) to form a ureido ring. The sequence is that of ATP-dependent dethiobiotin synthetase BioD from Afipia carboxidovorans (strain ATCC 49405 / DSM 1227 / KCTC 32145 / OM5) (Oligotropha carboxidovorans).